Here is a 183-residue protein sequence, read N- to C-terminus: UPF0725 protein At4g11700 (183 aa).

It belongs to the UPF0725 (EMB2204) family.

In Arabidopsis thaliana (Mouse-ear cress), this protein is UPF0725 protein At4g11700.